Consider the following 364-residue polypeptide: Popeye domain-containing protein 2 (364 aa).

N-linked (GlcNAc...) asparagine glycosylation occurs at N4. The next 2 membrane-spanning stretches (helical) occupy residues 37-57 (LLLG…FGFL) and 77-97 (IVLW…HLVY). The tract at residues 276 to 333 (ADAGPESEKGDEEVCEPAVSPPQATPTSLQQTPPCSTPPATTNFPAPPTRARLSRPDS) is disordered. The span at 300-309 (TPTSLQQTPP) shows a compositional bias: polar residues. A Phosphothreonine modification is found at T361.

This sequence belongs to the popeye family. Expressed predominantly in the heart and in the skeletal muscle.

The protein resides in the membrane. Its subcellular location is the cell membrane. It is found in the sarcolemma. Functionally, important for the maintenance of cardiac function. Plays a regulatory function in heart rate dynamics mediated, at least in part, through cAMP-binding and, probably, by increasing cell surface expression of the potassium channel KCNK2 and enhancing current density. In Homo sapiens (Human), this protein is Popeye domain-containing protein 2 (POPDC2).